We begin with the raw amino-acid sequence, 188 residues long: Peptidyl-prolyl cis-trans isomerase H (188 aa).

Position 2 is an N-acetylalanine (Ala2). The PPIase cyclophilin-type domain maps to 14 to 176 (FFDVSIGGQE…WTHSLTCPAL (163 aa)).

Belongs to the cyclophilin-type PPIase family. PPIase H subfamily. As to quaternary structure, interacts directly with PRPF4. Part of a heteromeric complex containing PPIH, PRPF3 and PRPF4 that is stable in the absence of RNA. Component of the U4/U6-U5 tri-snRNP complex composed of the U4, U6 and U5 snRNAs and at least PRPF3, PRPF4, PRPF6, PRPF8, PRPF31, SNRNP200, TXNL4A, SNRNP40, DDX23, CD2BP2, PPIH, SNU13, EFTUD2, SART1 and USP39. Heterodimer with PRPF18. Heterodimer with PRPF18.

The protein resides in the nucleus speckle. It is found in the cytoplasm. It carries out the reaction [protein]-peptidylproline (omega=180) = [protein]-peptidylproline (omega=0). Its activity is regulated as follows. Inhibited by cyclosporin A. In terms of biological role, PPIase that catalyzes the cis-trans isomerization of proline imidic peptide bonds in oligopeptides and may therefore assist protein folding. Participates in pre-mRNA splicing. May play a role in the assembly of the U4/U5/U6 tri-snRNP complex, one of the building blocks of the spliceosome. May act as a chaperone. The chain is Peptidyl-prolyl cis-trans isomerase H (Ppih) from Mus musculus (Mouse).